The following is a 425-amino-acid chain: Histidine--tRNA ligase (425 aa).

It belongs to the class-II aminoacyl-tRNA synthetase family. As to quaternary structure, homodimer.

The protein localises to the cytoplasm. It carries out the reaction tRNA(His) + L-histidine + ATP = L-histidyl-tRNA(His) + AMP + diphosphate + H(+). The chain is Histidine--tRNA ligase from Streptomyces coelicolor (strain ATCC BAA-471 / A3(2) / M145).